Consider the following 173-residue polypeptide: Protein-export protein SecB (173 aa).

The protein belongs to the SecB family. As to quaternary structure, homotetramer, a dimer of dimers. One homotetramer interacts with 1 SecA dimer.

It is found in the cytoplasm. One of the proteins required for the normal export of preproteins out of the cell cytoplasm. It is a molecular chaperone that binds to a subset of precursor proteins, maintaining them in a translocation-competent state. It also specifically binds to its receptor SecA. The chain is Protein-export protein SecB from Novosphingobium aromaticivorans (strain ATCC 700278 / DSM 12444 / CCUG 56034 / CIP 105152 / NBRC 16084 / F199).